The chain runs to 600 residues: Chaperone protein DnaK (600 aa).

T175 bears the Phosphothreonine; by autocatalysis mark. Residues 572 to 600 (FAQQTQQQDPNNQKDDVTEATVTDDSTKK) form a disordered region. Polar residues predominate over residues 591–600 (ATVTDDSTKK).

The protein belongs to the heat shock protein 70 family.

Acts as a chaperone. The protein is Chaperone protein DnaK of Ureaplasma urealyticum serovar 10 (strain ATCC 33699 / Western).